A 468-amino-acid polypeptide reads, in one-letter code: Heat stress transcription factor A-1e (468 aa).

A DNA-binding region spans residues 21–115 (IPPFLSKTYD…ILKSIVRRKP (95 aa)). Positions 133–199 (ACVEVGKFGL…QMMSFLAKAV (67 aa)) are hydrophobic repeat HR-A/B. The segment covering 211-220 (QSNEANQHIS) has biased composition (polar residues). Disordered stretches follow at residues 211 to 244 (QSNE…VNGL) and 268 to 309 (QMSN…PEVT). The Nuclear localization signal motif lies at 223–227 (NKKRR). The span at 277–305 (SLSSNNGSFLLGDVPNSNISDNGSSSNGS) shows a compositional bias: low complexity. Positions 402–411 (DSFWEQFIGE) match the AHA motif. The Nuclear export signal signature appears at 454-461 (LTEQMGLL).

It belongs to the HSF family. Class A subfamily. In terms of assembly, homotrimer. In terms of processing, exhibits temperature-dependent phosphorylation.

The protein localises to the cytoplasm. Its subcellular location is the nucleus. In terms of biological role, transcriptional activator that specifically binds DNA sequence 5'-AGAAnnTTCT-3' known as heat shock promoter elements (HSE). This Arabidopsis thaliana (Mouse-ear cress) protein is Heat stress transcription factor A-1e (HSFA1E).